A 433-amino-acid polypeptide reads, in one-letter code: DNA methyltransferase 1-associated protein 1 (433 aa).

Residues 1–204 (MSADVRDILD…EVVALLAKAK (204 aa)) are required for nuclear localization. The Myb-like domain occupies 148-197 (NNWSKVQTDHLFDLARRFDLRFIVMADRWNRQQHGTKTVEELKERYYEVV). A coiled-coil region spans residues 186–281 (VEELKERYYE…ADQQNEHASN (96 aa)). The span at 252-264 (EARKKERERKTQD) shows a compositional bias: basic and acidic residues. The disordered stretch occupies residues 252-305 (EARKKERERKTQDLQKLISQADQQNEHASNTPSTRKYEKKLHKKKVHQQPRPSR). The span at 268–285 (LISQADQQNEHASNTPST) shows a compositional bias: polar residues. A compositionally biased stretch (basic residues) spans 288–299 (YEKKLHKKKVHQ).

Interacts with Rel. Interacts with akirin and Bap55.

The protein localises to the nucleus. It is found in the cytoplasm. Its function is as follows. Involved in transcription repression and activation. Required for larvae and pupal development, and for normal innate immune responses. Involved in modulating the activation of the immune deficiency pathway (Imd), acting either downstream of, or at the level of, the NF-kappa-B factor Rel. Possibly functions with akirin to regulate Rel, and its interaction with the Brahma complex protein Bap55 suggests that it may regulate the IMD pathway at the level of chromatin remodeling. The protein is DNA methyltransferase 1-associated protein 1 of Drosophila melanogaster (Fruit fly).